Consider the following 486-residue polypeptide: UDP-N-acetylmuramate--L-alanine ligase (486 aa).

126–132 contributes to the ATP binding site; that stretch reads GTHGKTT.

The protein belongs to the MurCDEF family.

It is found in the cytoplasm. It catalyses the reaction UDP-N-acetyl-alpha-D-muramate + L-alanine + ATP = UDP-N-acetyl-alpha-D-muramoyl-L-alanine + ADP + phosphate + H(+). The protein operates within cell wall biogenesis; peptidoglycan biosynthesis. Functionally, cell wall formation. The sequence is that of UDP-N-acetylmuramate--L-alanine ligase from Pectobacterium carotovorum subsp. carotovorum (strain PC1).